A 98-amino-acid chain; its full sequence is NADH-ubiquinone oxidoreductase chain 4L (98 aa).

3 consecutive transmembrane segments (helical) span residues 2 to 22, 29 to 49, and 61 to 81; these read SLVY…LLMF, SLLC…ILIL, and IIML…LVMV.

It belongs to the complex I subunit 4L family. In terms of assembly, core subunit of respiratory chain NADH dehydrogenase (Complex I) which is composed of 45 different subunits.

It is found in the mitochondrion inner membrane. It catalyses the reaction a ubiquinone + NADH + 5 H(+)(in) = a ubiquinol + NAD(+) + 4 H(+)(out). In terms of biological role, core subunit of the mitochondrial membrane respiratory chain NADH dehydrogenase (Complex I) which catalyzes electron transfer from NADH through the respiratory chain, using ubiquinone as an electron acceptor. Part of the enzyme membrane arm which is embedded in the lipid bilayer and involved in proton translocation. In Galemys pyrenaicus (Iberian desman), this protein is NADH-ubiquinone oxidoreductase chain 4L (MT-ND4L).